A 193-amino-acid polypeptide reads, in one-letter code: Ion-translocating oxidoreductase complex subunit A (193 aa).

The next 6 helical transmembrane spans lie at 5–25 (LLLF…FLGL), 47–67 (FVMT…LIPL), 72–92 (LRTM…EMVV), 102–122 (LLGI…VALL), 134–154 (ALYG…FAAI), and 171–191 (AIAL…SGLV).

It belongs to the NqrDE/RnfAE family. As to quaternary structure, the complex is composed of six subunits: RsxA, RsxB, RsxC, RsxD, RsxE and RsxG.

It is found in the cell inner membrane. Functionally, part of a membrane-bound complex that couples electron transfer with translocation of ions across the membrane. Required to maintain the reduced state of SoxR. This is Ion-translocating oxidoreductase complex subunit A from Escherichia coli O45:K1 (strain S88 / ExPEC).